Here is a 455-residue protein sequence, read N- to C-terminus: SH3 domain-binding protein 5 (455 aa).

Basic and acidic residues predominate over residues 1 to 12 (MDAALKRSRSEE). Positions 1–63 (MDAALKRSRS…QSTDDINRRE (63 aa)) are disordered. Positions 22-41 (DEEEEEEEGMEQGLEEEEEV) are enriched in acidic residues. The tract at residues 31–265 (MEQGLEEEEE…EIHERRRSSA (235 aa)) is sufficient for interaction with RAB11A and for guanine nucleotide exchange activity. The span at 42-51 (DPRIQGELEK) shows a compositional bias: basic and acidic residues. Coiled coils occupy residues 44–90 (RIQG…LVKK), 97–145 (DSKP…RLLE), 154–200 (AWQE…LEKK), and 211–255 (YFEL…MISD). Disordered regions lie at residues 259–293 (ERRR…PEPD) and 306–345 (SCSN…VRPG). Over residues 306–317 (SCSNFVSEDDSE) the composition is skewed to acidic residues. A compositionally biased stretch (low complexity) spans 320 to 332 (SVSSFSSGPTSPS). Phosphoserine; by MAPK12 and MAPK9 is present on serine 351. The disordered stretch occupies residues 369-435 (SECSGASSPE…ALENRMKQLS (67 aa)). Residues serine 375 and serine 376 each carry the phosphoserine modification. Residues 380 to 396 (EVERGDRAEGAENKTSD) show a composition bias toward basic and acidic residues. Low complexity predominate over residues 403 to 421 (GLSSSSGSGGSSKSQSSTS). Serine 418 and serine 421 each carry phosphoserine.

It belongs to the SH3BP5 family. In terms of assembly, interacts with BTK. Interacts with all isoforms of MAPK8, MAPK9, MAPK10 and MAPK12. Interacts with GDP-bound and nucleotide-free forms of RAB11A. Highly expressed in testis and ovaries. It is also expressed in a variety of tissues including spleen, lymph node, thymus, bone marrow, fetal liver, colon, small intestine and prostate.

It localises to the cytoplasmic vesicle membrane. The protein resides in the mitochondrion. Functionally, functions as a guanine nucleotide exchange factor (GEF) with specificity for RAB11A and RAB25. Inhibits the auto- and transphosphorylation activity of BTK. Plays a negative regulatory role in BTK-related cytoplasmic signaling in B-cells. May be involved in BCR-induced apoptotic cell death. The chain is SH3 domain-binding protein 5 (SH3BP5) from Homo sapiens (Human).